We begin with the raw amino-acid sequence, 407 residues long: NADH-quinone oxidoreductase subunit D (407 aa).

The protein belongs to the complex I 49 kDa subunit family. As to quaternary structure, NDH-1 is composed of 14 different subunits. Subunits NuoB, C, D, E, F, and G constitute the peripheral sector of the complex.

It localises to the cell inner membrane. The catalysed reaction is a quinone + NADH + 5 H(+)(in) = a quinol + NAD(+) + 4 H(+)(out). NDH-1 shuttles electrons from NADH, via FMN and iron-sulfur (Fe-S) centers, to quinones in the respiratory chain. The immediate electron acceptor for the enzyme in this species is believed to be ubiquinone. Couples the redox reaction to proton translocation (for every two electrons transferred, four hydrogen ions are translocated across the cytoplasmic membrane), and thus conserves the redox energy in a proton gradient. This is NADH-quinone oxidoreductase subunit D from Roseobacter denitrificans (strain ATCC 33942 / OCh 114) (Erythrobacter sp. (strain OCh 114)).